Here is a 1707-residue protein sequence, read N- to C-terminus: Latrophilin Cirl (1707 aa).

The Extracellular portion of the chain corresponds to 1–767 (MLPTILSISY…LFTMFDGNMR (767 aa)). One can recognise an SUEL-type lectin domain in the interval 25-114 (ACEGKKLTIE…KYLEAHYQCI (90 aa)). A glycan (N-linked (GlcNAc...) asparagine) is linked at Asn-142. The interval 176-301 (GLFNVPPQHT…TAASGAVVPG (126 aa)) is disordered. Composition is skewed to polar residues over residues 185-198 (TAVT…STTA) and 256-265 (NATSPSNTRI). An N-linked (GlcNAc...) asparagine glycan is attached at Asn-256. Residues 275–285 (DDGTLLTTKSS) are compositionally biased toward low complexity. 6 N-linked (GlcNAc...) asparagine glycosylation sites follow: Asn-302, Asn-341, Asn-398, Asn-655, Asn-703, and Asn-730. The segment at 376–400 (YDEYDDDPSSTTPAPNGGDCLHNSS) is disordered. One can recognise a GAIN-B domain in the interval 561 to 754 (RSVVQKVKNI…AILMDVVDEH (194 aa)). 2 cysteine pairs are disulfide-bonded: Cys-709–Cys-736 and Cys-724–Cys-738. Residues 709–754 (CVFWNYIDHAWSANGCSLESTNRTHSVCSCNHLTNFAILMDVVDEH) form a GPS region. A helical membrane pass occupies residues 768-788 (IFIYISIGICVVFIVIALLTL). Residues 789-801 (KLFNGVFVKSART) lie on the Cytoplasmic side of the membrane. Residues 802 to 822 (SIYTSIYLCLLAIELLFLLGI) form a helical membrane-spanning segment. Topologically, residues 823–828 (EQTETS) are extracellular. The chain crosses the membrane as a helical span at residues 829–849 (IFCGFITIFLHCAILSGTAWF). Residues 850 to 875 (CYEAFHSYSTLTSDELLLEVDQTPKV) lie on the Cytoplasmic side of the membrane. A helical transmembrane segment spans residues 876–896 (NCYYLLSYGLSLSVVAISLVI). The Extracellular segment spans residues 897 to 920 (DPSTYTQNDYCVLMEANALFYATF). A helical membrane pass occupies residues 921–941 (VIPVLVFFVAAIGYTFLSWII). Residues 942-968 (LCRKSRTGLKTKEHTRLASVRFDIRCS) lie on the Cytoplasmic side of the membrane. Residues 969-989 (FVFLLLLSAVWCSSYFYLRGA) traverse the membrane as a helical segment. Over 990 to 999 (KMDDDTADVY) the chain is Extracellular. The helical transmembrane segment at 1000 to 1020 (GYCFICFNTLLGLYIFVFHCI) threads the bilayer. The Cytoplasmic segment spans residues 1021 to 1707 (QNEKIRREYR…VRCYLEPLAK (687 aa)). The residue at position 1156 (Ser-1156) is a Phosphoserine. Disordered regions lie at residues 1169–1188 (AHKQ…GEGY) and 1236–1260 (KPNS…SGSL). Residues 1172–1181 (QQQQQQQQQQ) show a composition bias toward low complexity. Residues Ser-1255 and Ser-1262 each carry the phosphoserine modification. Positions 1316–1326 (QQLHQQQQQQL) are enriched in low complexity. 4 disordered regions span residues 1316-1335 (QQLH…QVEQ), 1450-1538 (GGGS…SDER), 1563-1582 (APLD…EHNG), and 1612-1687 (GGRL…QQRH). Ser-1327 and Ser-1328 each carry phosphoserine. Over residues 1456 to 1481 (GGSVSSRSQQQQLKKQQQQQSLAQQR) the composition is skewed to low complexity. 2 stretches are compositionally biased toward acidic residues: residues 1489–1503 (DDDD…EEAT) and 1513–1526 (CDED…DLED). A compositionally biased stretch (polar residues) spans 1635–1650 (QTPAQKRQQLQKLSPQ). The segment covering 1651 to 1673 (STTSSSSHTSHSNPNPHPLQLTH) has biased composition (low complexity). A compositionally biased stretch (basic residues) spans 1674-1686 (PHPHQHPPHHQQR).

This sequence belongs to the G-protein coupled receptor 2 family. LN-TM7 subfamily. As to quaternary structure, forms a heterodimer, consisting of a large extracellular region non-covalently linked to a seven-transmembrane moiety. Proteolytically cleaved into 2 subunits, an extracellular subunit and a seven-transmembrane subunit.

Its subcellular location is the cell membrane. This is Latrophilin Cirl from Drosophila yakuba (Fruit fly).